The following is a 1654-amino-acid chain: Cortactin-binding protein 2 (1654 aa).

The disordered stretch occupies residues 1–31; sequence MATDGASCEPDFSRSPEDAAGATAEPAKKEF. A coiled-coil region spans residues 119-276; the sequence is RKMQERMSTQ…EQLKRGSDSK (158 aa). 3 disordered regions span residues 361-432, 455-480, and 495-596; these read SHGD…LHSP, GNAN…PTSR, and QALS…PQGN. Positions 368-379 are enriched in low complexity; the sequence is SSVPAAPTPSAS. 2 stretches are compositionally biased toward polar residues: residues 384–395 and 411–422; these read NGPSTGSAPDPT and QTPGTAAQSYSQ. Asymmetric dimethylarginine is present on Arg499. Polar residues predominate over residues 518–531; it reads DVSSHTPVSRTSLK. ANK repeat units lie at residues 710-740, 744-773, 777-806, 810-839, 843-872, and 913-943; these read GRPT…DINY, DGHS…QVNA, NGFT…NINH, GGQT…DRSV, DGWT…PIPG, and EGWT…EPER. The tract at residues 1454–1478 is disordered; that stretch reads GAWRKVSTSPRKKSGHFSSPVWNKP. Ser1523 carries the phosphoserine modification. The disordered stretch occupies residues 1556 to 1654; sequence RRLHSSGNNP…KEEIWNLRKK (99 aa). Over residues 1581-1598 the composition is skewed to polar residues; it reads KEVSPLSSHQTTECSNNK. Over residues 1623–1637 the composition is skewed to low complexity; it reads SQNTKRSSSSSNTRQ. The segment covering 1644–1654 has biased composition (basic and acidic residues); the sequence is SKEEIWNLRKK.

Interacts with CTTN/cortactin SH3 domain. Interacts with STRN, STRN4/zinedin and MOB4/phocein; this interactions mediate the association with the STRIPAK core complex and may regulate dendritic spine distribution of the STRIPAK complex in hippocampal neurons. Activation of glutamate receptors weakens the interaction with STRN and STRN4.

It is found in the cytoplasm. The protein resides in the cell cortex. Its subcellular location is the cell projection. It localises to the dendritic spine. In terms of biological role, regulates the dendritic spine distribution of CTTN/cortactin in hippocampal neurons, and thus controls dendritic spinogenesis and dendritic spine maintenance. Associates with the striatin-interacting phosphatase and kinase (STRIPAK) core complex to regulate dendritic spine distribution of the STRIPAK complex in hippocampal neurons. The polypeptide is Cortactin-binding protein 2 (CTTNBP2) (Atelerix albiventris (Middle-African hedgehog)).